The sequence spans 142 residues: Large ribosomal subunit protein uL11 (142 aa).

Belongs to the universal ribosomal protein uL11 family. In terms of assembly, part of the ribosomal stalk of the 50S ribosomal subunit. Interacts with L10 and the large rRNA to form the base of the stalk. L10 forms an elongated spine to which L12 dimers bind in a sequential fashion forming a multimeric L10(L12)X complex. In terms of processing, one or more lysine residues are methylated.

Forms part of the ribosomal stalk which helps the ribosome interact with GTP-bound translation factors. The protein is Large ribosomal subunit protein uL11 of Akkermansia muciniphila (strain ATCC BAA-835 / DSM 22959 / JCM 33894 / BCRC 81048 / CCUG 64013 / CIP 107961 / Muc).